Reading from the N-terminus, the 87-residue chain is Small ribosomal subunit protein uS17 (87 aa).

It belongs to the universal ribosomal protein uS17 family. In terms of assembly, part of the 30S ribosomal subunit.

Its function is as follows. One of the primary rRNA binding proteins, it binds specifically to the 5'-end of 16S ribosomal RNA. This is Small ribosomal subunit protein uS17 from Bacillus pumilus (strain SAFR-032).